A 124-amino-acid chain; its full sequence is Small ribosomal subunit protein uS12 (124 aa).

Position 89 is a 3-methylthioaspartic acid (aspartate 89). Residues 105–124 (QGVKNRKQARSRYGAKKEKS) are disordered. Basic residues predominate over residues 108–118 (KNRKQARSRYG).

The protein belongs to the universal ribosomal protein uS12 family. As to quaternary structure, part of the 30S ribosomal subunit. Contacts proteins S8 and S17. May interact with IF1 in the 30S initiation complex.

Functionally, with S4 and S5 plays an important role in translational accuracy. Its function is as follows. Interacts with and stabilizes bases of the 16S rRNA that are involved in tRNA selection in the A site and with the mRNA backbone. Located at the interface of the 30S and 50S subunits, it traverses the body of the 30S subunit contacting proteins on the other side and probably holding the rRNA structure together. The combined cluster of proteins S8, S12 and S17 appears to hold together the shoulder and platform of the 30S subunit. This Mycobacterium sp. (strain JLS) protein is Small ribosomal subunit protein uS12.